We begin with the raw amino-acid sequence, 560 residues long: Cytosolic purine 5'-nucleotidase (560 aa).

The active-site Nucleophile is the Asp-52. Positions 52 and 54 each coordinate IMP. Residues Asp-52 and Asp-54 each contribute to the Mg(2+) site. Asp-54 (proton donor) is an active-site residue. ATP-binding residues include Arg-144 and Asn-154. 7 residues coordinate IMP: Arg-202, Asp-206, Lys-215, Thr-249, Asn-250, Ser-251, and Lys-292. Residue Asp-351 coordinates Mg(2+). The residue at position 418 (Ser-418) is a Phosphoserine. The ATP site is built by Gln-453 and Arg-456. Residues Ser-502, Ser-511, and Ser-527 each carry the phosphoserine modification. The tract at residues 541–560 is disordered; sequence PQEITHCHDEDDDEEEEEEE. The tract at residues 548-560 is required for tetramer assembly; sequence HDEDDDEEEEEEE. The span at 550-560 shows a compositional bias: acidic residues; that stretch reads EDDDEEEEEEE.

Belongs to the 5'(3')-deoxyribonucleotidase family. As to quaternary structure, homotetramer. Requires Mg(2+) as cofactor.

Its subcellular location is the cytoplasm. The protein resides in the cytosol. The enzyme catalyses a ribonucleoside 5'-phosphate + H2O = a ribonucleoside + phosphate. The catalysed reaction is a 2'-deoxyribonucleoside + a ribonucleoside 5'-phosphate = a ribonucleoside + a 2'-deoxyribonucleoside 5'-phosphate. It catalyses the reaction IMP + H2O = inosine + phosphate. It carries out the reaction GMP + H2O = guanosine + phosphate. The enzyme catalyses dIMP + H2O = 2'-deoxyinosine + phosphate. The catalysed reaction is dGMP + H2O = 2'-deoxyguanosine + phosphate. It catalyses the reaction XMP + H2O = xanthosine + phosphate. It carries out the reaction inosine + GMP = guanosine + IMP. The enzyme catalyses dGMP + inosine = 2'-deoxyguanosine + IMP. The catalysed reaction is dIMP + inosine = 2'-deoxyinosine + IMP. It catalyses the reaction inosine + UMP = uridine + IMP. It carries out the reaction inosine + CMP = cytidine + IMP. The enzyme catalyses inosine + AMP = IMP + adenosine. Allosterically activated by various compounds including ATP, 2,3-BPG/2,3-Bisphosphoglyceric acid and Ap4A/P1,P4-bis(5'-adenosyl) tetraphosphate. Binding of an allosteric activator is a prerequisiste to magnesium and substrate binding. Inhibited by inorganic phosphate. In terms of biological role, broad specificity cytosolic 5'-nucleotidase that catalyzes the dephosphorylation of 6-hydroxypurine nucleoside 5'-monophosphates. In addition, possesses a phosphotransferase activity by which it can transfer a phosphate from a donor nucleoside monophosphate to an acceptor nucleoside, preferably inosine, deoxyinosine and guanosine. Has the highest activities for IMP and GMP followed by dIMP, dGMP and XMP. Could also catalyze the transfer of phosphates from pyrimidine monophosphates but with lower efficiency. Through these activities regulates the purine nucleoside/nucleotide pools within the cell. The protein is Cytosolic purine 5'-nucleotidase of Rattus norvegicus (Rat).